Here is a 130-residue protein sequence, read N- to C-terminus: Small ribosomal subunit protein uS8 (130 aa).

The protein belongs to the universal ribosomal protein uS8 family. As to quaternary structure, part of the 30S ribosomal subunit.

Functionally, one of the primary rRNA binding proteins, it binds directly to 16S rRNA central domain where it helps coordinate assembly of the platform of the 30S subunit. This is Small ribosomal subunit protein uS8 (rps8) from Methanocaldococcus jannaschii (strain ATCC 43067 / DSM 2661 / JAL-1 / JCM 10045 / NBRC 100440) (Methanococcus jannaschii).